Reading from the N-terminus, the 117-residue chain is Small ribosomal subunit protein bS6 (117 aa).

Residues 96 to 117 form a disordered region; that stretch reads HDEGPSVQMQKRDEREGRRERR.

The protein belongs to the bacterial ribosomal protein bS6 family.

In terms of biological role, binds together with bS18 to 16S ribosomal RNA. This chain is Small ribosomal subunit protein bS6, found in Jannaschia sp. (strain CCS1).